A 225-amino-acid polypeptide reads, in one-letter code: Golgi to ER traffic protein 1 (225 aa).

A topological domain (lumenal) is located at residue methionine 1. The helical transmembrane segment at 2-21 threads the bilayer; sequence NWVIIAALFFVIINKLLQYT. Residues 22 to 107 are Cytoplasmic-facing; it reads SRYQEAWINK…SQSKLFNRLK (86 aa). A coiled-coil region spans residues 37–104; the sequence is DISSLSKEYS…AKDSQSKLFN (68 aa). Residues 108–128 form a helical membrane-spanning segment; sequence LLTLTLPFMILKLWKGKFIVY. At 129 to 172 the chain is on the lumenal side; the sequence is DIPTKDTFPVIVNGVLSQGLLYIPLLPINFLRGIDPNKHILVPG. The chain crosses the membrane as a helical span at residues 173 to 189; sequence VSLGIWLMALTKTIDTV. The Cytoplasmic segment spans residues 190 to 225; sequence EFIVKQLVFQPVVSKQVKEKTKEKVVELKTTEAELD.

The protein belongs to the WRB/GET1 family. Component of the Golgi to ER traffic (GET) complex, which is composed of GET1, GET2 and GET3. Within the complex, GET1 and GET2 form a heterotetramer which is stabilized by phosphatidylinositol binding and which binds to the GET3 homodimer.

Its subcellular location is the endoplasmic reticulum membrane. The protein resides in the golgi apparatus membrane. Its function is as follows. Required for the post-translational delivery of tail-anchored (TA) proteins to the endoplasmic reticulum. Together with GET2, acts as a membrane receptor for soluble GET3, which recognizes and selectively binds the transmembrane domain of TA proteins in the cytosol. The GET complex cooperates with the HDEL receptor ERD2 to mediate the ATP-dependent retrieval of resident ER proteins that contain a C-terminal H-D-E-L retention signal from the Golgi to the ER. The polypeptide is Golgi to ER traffic protein 1 (Vanderwaltozyma polyspora (strain ATCC 22028 / DSM 70294 / BCRC 21397 / CBS 2163 / NBRC 10782 / NRRL Y-8283 / UCD 57-17) (Kluyveromyces polysporus)).